A 262-amino-acid polypeptide reads, in one-letter code: Ribose-5-phosphate isomerase A (262 aa).

Residues 33-36, 89-92, and 102-105 each bind substrate; these read TGST, DGAD, and KGGG. Catalysis depends on Glu111, which acts as the Proton acceptor. Lys129 contributes to the substrate binding site.

It belongs to the ribose 5-phosphate isomerase family. As to quaternary structure, homodimer.

It carries out the reaction aldehydo-D-ribose 5-phosphate = D-ribulose 5-phosphate. It participates in carbohydrate degradation; pentose phosphate pathway; D-ribose 5-phosphate from D-ribulose 5-phosphate (non-oxidative stage): step 1/1. In terms of biological role, catalyzes the reversible conversion of ribose-5-phosphate to ribulose 5-phosphate. This is Ribose-5-phosphate isomerase A from Roseobacter denitrificans (strain ATCC 33942 / OCh 114) (Erythrobacter sp. (strain OCh 114)).